Here is a 63-residue protein sequence, read N- to C-terminus: Cytochrome c oxidase subunit 7C, mitochondrial (63 aa).

Residues 1 to 16 (MLGQSIRRFTTSVVRR) constitute a mitochondrion transit peptide. At 17-33 (SHYEEGPGKNLPFSVEN) the chain is on the mitochondrial matrix side. Lys-25 carries the N6-acetyllysine; alternate modification. Lys-25 is subject to N6-succinyllysine; alternate. Residues 34–60 (KWRLLLMMTVYFGSGFAAPFFIVRHQL) traverse the membrane as a helical segment. Topologically, residues 61-63 (LKK) are mitochondrial intermembrane.

This sequence belongs to the cytochrome c oxidase VIIc family. As to quaternary structure, component of the cytochrome c oxidase (complex IV, CIV), a multisubunit enzyme composed of 14 subunits. The complex is composed of a catalytic core of 3 subunits MT-CO1, MT-CO2 and MT-CO3, encoded in the mitochondrial DNA, and 11 supernumerary subunits COX4I, COX5A, COX5B, COX6A, COX6B, COX6C, COX7A, COX7B, COX7C, COX8 and NDUFA4, which are encoded in the nuclear genome. The complex exists as a monomer or a dimer and forms supercomplexes (SCs) in the inner mitochondrial membrane with NADH-ubiquinone oxidoreductase (complex I, CI) and ubiquinol-cytochrome c oxidoreductase (cytochrome b-c1 complex, complex III, CIII), resulting in different assemblies (supercomplex SCI(1)III(2)IV(1) and megacomplex MCI(2)III(2)IV(2)). Interacts with RAB5IF.

Its subcellular location is the mitochondrion inner membrane. The protein operates within energy metabolism; oxidative phosphorylation. Functionally, component of the cytochrome c oxidase, the last enzyme in the mitochondrial electron transport chain which drives oxidative phosphorylation. The respiratory chain contains 3 multisubunit complexes succinate dehydrogenase (complex II, CII), ubiquinol-cytochrome c oxidoreductase (cytochrome b-c1 complex, complex III, CIII) and cytochrome c oxidase (complex IV, CIV), that cooperate to transfer electrons derived from NADH and succinate to molecular oxygen, creating an electrochemical gradient over the inner membrane that drives transmembrane transport and the ATP synthase. Cytochrome c oxidase is the component of the respiratory chain that catalyzes the reduction of oxygen to water. Electrons originating from reduced cytochrome c in the intermembrane space (IMS) are transferred via the dinuclear copper A center (CU(A)) of subunit 2 and heme A of subunit 1 to the active site in subunit 1, a binuclear center (BNC) formed by heme A3 and copper B (CU(B)). The BNC reduces molecular oxygen to 2 water molecules using 4 electrons from cytochrome c in the IMS and 4 protons from the mitochondrial matrix. The polypeptide is Cytochrome c oxidase subunit 7C, mitochondrial (Cox7c) (Rattus norvegicus (Rat)).